Consider the following 683-residue polypeptide: Transforming growth factor-beta-induced protein ig-h3 (683 aa).

The signal sequence occupies residues 1–23 (MALLGRLLPLALALALGPAATPA). Ser37 is subject to Phosphoserine. In terms of domain architecture, EMI spans 45-99 (GPNVCAVQKLIGTNKKYFTNCKQWYQRKICGKSTVISYECCPGYEKVPGEKGCPA). 5 disulfide bridges follow: Cys49–Cys85, Cys74–Cys339, Cys84–Cys97, Cys214–Cys317, and Cys473–Cys478. Cys65 is subject to S-cysteinyl cysteine. 4 FAS1 domains span residues 103-236 (LSNL…DKVI), 240-371 (TNNI…DELL), 375-498 (SAKT…DRML), and 502-632 (MGTV…SSVL). Residues 642–644 (RGD) carry the Cell attachment site motif.

Binds to type I, II, and IV collagens. In terms of processing, gamma-carboxylation is controversial. Gamma-carboxyglutamated; gamma-carboxyglutamate residues are formed by vitamin K dependent carboxylation; this may be required for calcium binding. According to a more recent report, does not contain vitamin K-dependent gamma-carboxyglutamate residues. The EMI domain contains 2 expected intradomain disulfide bridges (Cys-49-Cys85 and Cys-84-Cys-97) and one unusual interdomain disulfide bridge to the second FAS1 domain (Cys-74-Cys-339). This arrangement violates the predicted disulfide bridge pattern of an EMI domain.

The protein resides in the secreted. The protein localises to the extracellular space. It is found in the extracellular matrix. In terms of biological role, plays a role in cell adhesion. May play a role in cell-collagen interactions. This is Transforming growth factor-beta-induced protein ig-h3 (TGFBI) from Bos taurus (Bovine).